Here is a 593-residue protein sequence, read N- to C-terminus: MLO-like protein 8 (593 aa).

Residues 1-46 (MGIIDGSLLRRLICLCLWCLLGGGVTVVTAEDEKKVVHKQLNQTPT) lie on the Extracellular side of the membrane. The chain crosses the membrane as a helical span at residues 47 to 67 (WAVAAVCTFFIVVSVLLEKLL). Residues 68 to 92 (HKVGKVLWDRHKTALLDALEKIKAE) are Cytoplasmic-facing. A helical transmembrane segment spans residues 93–113 (LMVLGFISLLLTFGQTYILDI). At 114 to 181 (CIPSHVARTM…ISAEALHQLH (68 aa)) the chain is on the extracellular side. Residues 182-202 (ILIFFLAIFHVLYSFLTMMLG) traverse the membrane as a helical segment. Residues 203–304 (RLKIRGWKHW…IKRSLEDDFK (102 aa)) are Cytoplasmic-facing. The helical transmembrane segment at 305–325 (VVVGVSPVLWGSFVLFLLLNI) threads the bilayer. Position 326 (aspartate 326) is a topological domain, extracellular. The helical transmembrane segment at 327–347 (GFKMMFIGTAIPVIIILAVGT) threads the bilayer. Over 348–393 (KLQAIMTRMALGITDRHAVVQGMPLVQGNDEYFWFGRPHLILHLMH) the chain is Cytoplasmic. The chain crosses the membrane as a helical span at residues 394 to 414 (FALFQNAFQITYFFWIWYSFG). The Extracellular segment spans residues 415–430 (SDSCYHPNFKIALVKV). The helical transmembrane segment at 431 to 451 (AIALGVLCLCSYITLPLYALV) threads the bilayer. The Cytoplasmic segment spans residues 452 to 593 (TQMGSRMKKS…APSNESSQDR (142 aa)). Residues 465 to 486 (EQTSKALKKWRMAVKKKKGVKA) form a calmodulin-binding region. The tract at residues 481–593 (KKGVKATTKR…APSNESSQDR (113 aa)) is disordered. Residues 489–512 (KRLGGDGSASPTASTVRSTSSVRS) are compositionally biased toward low complexity. The span at 528–539 (LDPETSDLDTDN) shows a compositional bias: acidic residues. Basic and acidic residues predominate over residues 567–579 (TSRDTETDSKEFS).

It belongs to the MLO family.

It is found in the membrane. Functionally, may be involved in modulation of pathogen defense and leaf cell death. Activity seems to be regulated by Ca(2+)-dependent calmodulin binding and seems not to require heterotrimeric G proteins. The polypeptide is MLO-like protein 8 (MLO8) (Arabidopsis thaliana (Mouse-ear cress)).